The primary structure comprises 344 residues: L-rhamnose-proton symporter (344 aa).

10 helical membrane passes run 4–24 (AITMGIFWHLIGAASAACFYA), 38–58 (WSVGGIVSWLILPWTISALLL), 68–88 (FNLSTLLPVFLFGAMWGIGNI), 101–121 (MGIGIAIGITLIVGTLMTPII), 137–157 (TLLGVFVALIGVGIVTRAGQL), 175–195 (LLLAVMCGIFSAGMSFAMNAA), 214–234 (LPSYVVIMGGGALVNLGFCFI), 259–279 (ILLSALGGLMWYLQFFFYAWG), 290–310 (MSWMLHMSFYVLCGGLVGLVL), and 321–341 (VAVLSLGCVVIIIAANIVGLG).

It belongs to the L-rhamnose transporter (TC 2.A.7.6) family.

Its subcellular location is the cell inner membrane. It carries out the reaction L-rhamnopyranose(in) + H(+)(in) = L-rhamnopyranose(out) + H(+)(out). Functionally, uptake of L-rhamnose across the cytoplasmic membrane with the concomitant transport of protons into the cell (symport system). This Salmonella agona (strain SL483) protein is L-rhamnose-proton symporter.